We begin with the raw amino-acid sequence, 242 residues long: Probable transcriptional regulatory protein Cthe_2075 (242 aa).

The protein belongs to the TACO1 family.

The protein resides in the cytoplasm. The chain is Probable transcriptional regulatory protein Cthe_2075 from Acetivibrio thermocellus (strain ATCC 27405 / DSM 1237 / JCM 9322 / NBRC 103400 / NCIMB 10682 / NRRL B-4536 / VPI 7372) (Clostridium thermocellum).